Here is a 511-residue protein sequence, read N- to C-terminus: GMP synthase [glutamine-hydrolyzing] (511 aa).

Residues 5-195 form the Glutamine amidotransferase type-1 domain; it reads DILVLDFGSQ…AKYACNCDSV (191 aa). Catalysis depends on Cys-82, which acts as the Nucleophile. Catalysis depends on residues His-169 and Glu-171. Residues 196–386 form the GMPS ATP-PPase domain; the sequence is WNMGSFAKTQ…LGLSKDVVYR (191 aa). 223–229 contributes to the ATP binding site; it reads SGGVDSS.

In terms of assembly, homodimer.

The catalysed reaction is XMP + L-glutamine + ATP + H2O = GMP + L-glutamate + AMP + diphosphate + 2 H(+). It participates in purine metabolism; GMP biosynthesis; GMP from XMP (L-Gln route): step 1/1. Catalyzes the synthesis of GMP from XMP. In Campylobacter lari (strain RM2100 / D67 / ATCC BAA-1060), this protein is GMP synthase [glutamine-hydrolyzing].